The following is a 357-amino-acid chain: MSMRPVPGSLSSLLHLHNRQRQPMPASMPGTLPNPTMPGSSAVLMPMERQMSVNSSIMGMQGPNLSNPCASPQVQPMHSEAKMRLKAALTHHPAAMSNGNMSTIGHMMEMMGSRQDQTPHHHLHSHPHQHQTLPPHHPYPHQHQHPAHHPHPQPHHQQNHPHHHSHSHLHAHPAHHQTSPHPPLHTGNQAQVSPATQQMQPTQTIQPPQPTGGRRRRVVDEDPDERRRKFLERNRAAATRCRQKRKVWVMSLEKKAEELTQTNMQLQNEVSMLKNEVAQLKQLLLTHKDCPITAMQKESQGYLSPESSPPASPVPACSQQQVIQHNTITTSSSVSEVVGSSTLSQLTTHRTDLNPIL.

The tract at residues Arg114–Thr239 is disordered. Basic residues-rich tracts occupy residues His120 to Gln129 and Pro138 to His175. Residues Thr186–Ala195 show a composition bias toward polar residues. Low complexity predominate over residues Thr196–Gln206. Residues Val218 to Arg235 are compositionally biased toward basic and acidic residues. Residues Asp224–His287 enclose the bZIP domain. The segment at Arg226–Lys246 is basic motif. The interval Leu252 to Leu280 is leucine-zipper. Residues Glu298–Ser318 are disordered.

This sequence belongs to the bZIP family. Binds DNA as a homodimer or as a heterodimer with JUN or ATF2/CREBP1.

Its subcellular location is the nucleus. Its function is as follows. Binds to the cAMP response element and activates transcription. The protein is Cyclic AMP-responsive element-binding protein 5 (Creb5) of Mus musculus (Mouse).